The following is a 306-amino-acid chain: Putative transcriptional regulator (306 aa).

The region spanning methionine 1–threonine 61 is the HTH lysR-type domain. A DNA-binding region (H-T-H motif) is located at residues phenylalanine 21–serine 40.

It belongs to the LysR transcriptional regulatory family.

May have a role in the regulation of oprD expression. This chain is Putative transcriptional regulator, found in Pseudomonas aeruginosa (strain ATCC 15692 / DSM 22644 / CIP 104116 / JCM 14847 / LMG 12228 / 1C / PRS 101 / PAO1).